A 758-amino-acid polypeptide reads, in one-letter code: Spastin (758 aa).

The segment at 1–99 (MVRTKNQSSS…PTTCSPRSGH (99 aa)) is disordered. Residues 1–121 (MVRTKNQSSS…KQNLYVVSFP (121 aa)) lie on the Cytoplasmic side of the membrane. A required for localization to punctate cytoplasmic foci region spans residues 1 to 210 (MVRTKNQSSS…RPIQPLEMAA (210 aa)). Composition is skewed to low complexity over residues 8 to 29 (SSSS…SATG), 43 to 58 (RSSS…AGGS), 66 to 76 (SSNRRSPGSSP), and 85 to 95 (TDDLTPTTCSP). Positions 122–142 (IIFLFNVLRSLIYQLFCIFRY) form an intramembrane region, helical. The Cytoplasmic portion of the chain corresponds to 143–758 (LYGASTKVIY…WSQDYGDITI (616 aa)). Polar residues-rich tracts occupy residues 169 to 180 (SKEQQQSLNHPS) and 189 to 198 (QEQQLSNQPQ). Residues 169–221 (SKEQQQSLNHPSELNRDSDGQEQQLSNQPQRFRPIQPLEMAANRPGGGYSPGP) are disordered. Residues 208-758 (MAANRPGGGY…WSQDYGDITI (551 aa)) form a sufficient for interaction with microtubules and microtubule severing region. Residues 233–308 (HRRAFEYISK…SMARDRLHFL (76 aa)) enclose the MIT domain. Disordered stretches follow at residues 353–376 (RVRS…GRKL) and 390–454 (NKSQ…ASTP). Composition is skewed to polar residues over residues 390–406 (NKSQ…TSVG) and 425–454 (QFSS…ASTP). The required for interaction with microtubules stretch occupies residues 443–455 (NNGPSGSGASTPV). 523–530 (GPPGNGKT) contacts ATP.

Belongs to the AAA ATPase family. Spastin subfamily. As to quaternary structure, homohexamer. The homohexamer is stabilized by ATP-binding. The homohexamer may adopt a ring conformation through which microtubules pass prior to being severed. Interacts with microtubules. Interacts with atl; may be involved in microtubule dynamics.

It localises to the membrane. It is found in the cytoplasm. Its subcellular location is the cytoskeleton. The protein localises to the microtubule organizing center. The protein resides in the centrosome. It localises to the chromosome. It is found in the lipid droplet. It carries out the reaction n ATP + n H2O + a microtubule = n ADP + n phosphate + (n+1) alpha/beta tubulin heterodimers.. Its function is as follows. ATP-dependent microtubule severing protein. Stimulates microtubule minus-end depolymerization and poleward microtubule flux in the mitotic spindle. Regulates microtubule stability in the neuromuscular junction synapse. Involved in lipid metabolism by regulating the size and distribution of lipid droplets. Involved in axon regeneration by regulating microtubule severing. The chain is Spastin from Drosophila yakuba (Fruit fly).